Consider the following 564-residue polypeptide: 2-succinyl-5-enolpyruvyl-6-hydroxy-3-cyclohexene-1-carboxylate synthase (564 aa).

It belongs to the TPP enzyme family. MenD subfamily. In terms of assembly, homodimer. The cofactor is Mg(2+). Requires Mn(2+) as cofactor. Thiamine diphosphate serves as cofactor.

The enzyme catalyses isochorismate + 2-oxoglutarate + H(+) = 5-enolpyruvoyl-6-hydroxy-2-succinyl-cyclohex-3-ene-1-carboxylate + CO2. It participates in quinol/quinone metabolism; 1,4-dihydroxy-2-naphthoate biosynthesis; 1,4-dihydroxy-2-naphthoate from chorismate: step 2/7. The protein operates within quinol/quinone metabolism; menaquinone biosynthesis. Catalyzes the thiamine diphosphate-dependent decarboxylation of 2-oxoglutarate and the subsequent addition of the resulting succinic semialdehyde-thiamine pyrophosphate anion to isochorismate to yield 2-succinyl-5-enolpyruvyl-6-hydroxy-3-cyclohexene-1-carboxylate (SEPHCHC). This chain is 2-succinyl-5-enolpyruvyl-6-hydroxy-3-cyclohexene-1-carboxylate synthase, found in Photorhabdus laumondii subsp. laumondii (strain DSM 15139 / CIP 105565 / TT01) (Photorhabdus luminescens subsp. laumondii).